We begin with the raw amino-acid sequence, 243 residues long: Carboxy-S-adenosyl-L-methionine synthase (243 aa).

Residues tyrosine 40, 65-67 (GCS), 90-91 (DN), 118-119 (DI), asparagine 133, and arginine 200 each bind S-adenosyl-L-methionine.

This sequence belongs to the class I-like SAM-binding methyltransferase superfamily. Cx-SAM synthase family. As to quaternary structure, homodimer.

The catalysed reaction is prephenate + S-adenosyl-L-methionine = carboxy-S-adenosyl-L-methionine + 3-phenylpyruvate + H2O. Its function is as follows. Catalyzes the conversion of S-adenosyl-L-methionine (SAM) to carboxy-S-adenosyl-L-methionine (Cx-SAM). The protein is Carboxy-S-adenosyl-L-methionine synthase of Shewanella baltica (strain OS155 / ATCC BAA-1091).